We begin with the raw amino-acid sequence, 275 residues long: NH(3)-dependent NAD(+) synthetase (275 aa).

Position 50-57 (50-57 (GISGGVDS)) interacts with ATP. Asp56 contacts Mg(2+). Residue Arg147 participates in deamido-NAD(+) binding. Thr167 provides a ligand contact to ATP. Glu172 contacts Mg(2+). Deamido-NAD(+)-binding residues include Lys180 and Asp187. ATP-binding residues include Lys196 and Thr218. 267–268 (HK) contacts deamido-NAD(+).

The protein belongs to the NAD synthetase family. Homodimer.

It carries out the reaction deamido-NAD(+) + NH4(+) + ATP = AMP + diphosphate + NAD(+) + H(+). Its pathway is cofactor biosynthesis; NAD(+) biosynthesis; NAD(+) from deamido-NAD(+) (ammonia route): step 1/1. In terms of biological role, catalyzes the ATP-dependent amidation of deamido-NAD to form NAD. Uses ammonia as a nitrogen source. In Pseudomonas putida (strain GB-1), this protein is NH(3)-dependent NAD(+) synthetase.